The following is a 334-amino-acid chain: Malate dehydrogenase, cytoplasmic (334 aa).

N-acetylserine is present on Ser2. Residues Gly11–Ala17 and Asp42 contribute to the NAD(+) site. Residues Arg92 and Arg98 each contribute to the substrate site. Asn105 is an NAD(+) binding site. Lys110 is subject to N6-succinyllysine. Gln112 contributes to the NAD(+) binding site. An N6-acetyllysine mark is found at Lys118 and Lys121. Val129–Asn131 contacts NAD(+). Asn131 and Arg162 together coordinate substrate. His187 functions as the Proton acceptor in the catalytic mechanism. Residue Lys214 is modified to N6-succinyllysine. Ser217 carries the phosphoserine modification. At Arg230 the chain carries Omega-N-methylarginine. Residue Ser241 is modified to Phosphoserine. Position 298 is an N6-acetyllysine; alternate (Lys298). Lys298 is modified (N6-succinyllysine; alternate). At Ser309 the chain carries Phosphoserine. At Lys318 the chain carries N6-succinyllysine. Ser332 and Ser333 each carry phosphoserine.

It belongs to the LDH/MDH superfamily. MDH type 2 family. As to quaternary structure, homodimer. ISGylated. Post-translationally, acetylation at Lys-118 dramatically enhances enzymatic activity and promotes adipogenic differentiation.

The protein resides in the cytoplasm. The protein localises to the cytosol. It catalyses the reaction (S)-malate + NAD(+) = oxaloacetate + NADH + H(+). The catalysed reaction is (2R)-2-hydroxy-3-(4-hydroxyphenyl)propanoate + NAD(+) = 3-(4-hydroxyphenyl)pyruvate + NADH + H(+). It carries out the reaction (S)-2-hydroxyglutarate + NAD(+) = 2-oxoglutarate + NADH + H(+). In terms of biological role, catalyzes the reduction of aromatic alpha-keto acids in the presence of NADH. Plays essential roles in the malate-aspartate shuttle and the tricarboxylic acid cycle, important in mitochondrial NADH supply for oxidative phosphorylation. Catalyzes the reduction of 2-oxoglutarate to 2-hydroxyglutarate, leading to elevated reactive oxygen species (ROS). In Rattus norvegicus (Rat), this protein is Malate dehydrogenase, cytoplasmic (Mdh1).